The primary structure comprises 198 residues: Protein GrpE (198 aa).

A disordered region spans residues 1–58 (MTEKDQSVNNEEFAEKEDNTAKDSNTDEQIEKTASEDDVQNDSSAVDDKEKEIQQLKE). Basic and acidic residues-rich tracts occupy residues 16-35 (KEDN…KTAS) and 46-58 (VDDK…QLKE).

It belongs to the GrpE family. In terms of assembly, homodimer.

The protein resides in the cytoplasm. In terms of biological role, participates actively in the response to hyperosmotic and heat shock by preventing the aggregation of stress-denatured proteins, in association with DnaK and GrpE. It is the nucleotide exchange factor for DnaK and may function as a thermosensor. Unfolded proteins bind initially to DnaJ; upon interaction with the DnaJ-bound protein, DnaK hydrolyzes its bound ATP, resulting in the formation of a stable complex. GrpE releases ADP from DnaK; ATP binding to DnaK triggers the release of the substrate protein, thus completing the reaction cycle. Several rounds of ATP-dependent interactions between DnaJ, DnaK and GrpE are required for fully efficient folding. This is Protein GrpE from Staphylococcus carnosus (strain TM300).